The following is a 232-amino-acid chain: RNA chaperone ProQ (232 aa).

The interval 105–182 (EAKARVQAQR…REEQHTPVSD (78 aa)) is disordered. Over residues 117-136 (QQAKKREAAATAGEKEDAPR) the composition is skewed to basic and acidic residues. A compositionally biased stretch (basic residues) spans 137-146 (RERKPRPTTP). Positions 147–177 (RRKEGAERKPRAQKPVEKAPKTVKAPREEQH) are enriched in basic and acidic residues.

The protein belongs to the ProQ family.

The protein localises to the cytoplasm. Its function is as follows. RNA chaperone with significant RNA binding, RNA strand exchange and RNA duplexing activities. May regulate ProP activity through an RNA-based, post-transcriptional mechanism. The chain is RNA chaperone ProQ from Escherichia coli (strain K12).